Consider the following 123-residue polypeptide: Glutaredoxin-like protein (123 aa).

The Glutaredoxin domain maps to 27–123 (INEVEESITN…GTLFNDLKKK (97 aa)).

The protein belongs to the glutaredoxin family.

The polypeptide is Glutaredoxin-like protein (grxB) (Dictyostelium discoideum (Social amoeba)).